The sequence spans 526 residues: Bifunctional purine biosynthesis protein PurH (526 aa).

Residues 1-147 (MSVIKRALIS…KNWKHVAIVT (147 aa)) form the MGS-like domain.

Belongs to the PurH family.

The catalysed reaction is (6R)-10-formyltetrahydrofolate + 5-amino-1-(5-phospho-beta-D-ribosyl)imidazole-4-carboxamide = 5-formamido-1-(5-phospho-D-ribosyl)imidazole-4-carboxamide + (6S)-5,6,7,8-tetrahydrofolate. It carries out the reaction IMP + H2O = 5-formamido-1-(5-phospho-D-ribosyl)imidazole-4-carboxamide. The protein operates within purine metabolism; IMP biosynthesis via de novo pathway; 5-formamido-1-(5-phospho-D-ribosyl)imidazole-4-carboxamide from 5-amino-1-(5-phospho-D-ribosyl)imidazole-4-carboxamide (10-formyl THF route): step 1/1. Its pathway is purine metabolism; IMP biosynthesis via de novo pathway; IMP from 5-formamido-1-(5-phospho-D-ribosyl)imidazole-4-carboxamide: step 1/1. The protein is Bifunctional purine biosynthesis protein PurH of Neisseria gonorrhoeae (strain NCCP11945).